Here is a 205-residue protein sequence, read N- to C-terminus: Golgi apparatus membrane protein TVP23 homolog B (205 aa).

Met-1 is modified (N-acetylmethionine). The interval 1–21 is disordered; it reads MLQQDSNDDTEDVSLFDAEEE. 4 helical membrane-spanning segments follow: residues 34-53, 54-72, 126-146, and 152-172; these read PVAS…VYLL, CELL…ILLL, IFWL…FSAL, and KWLA…YGYI.

The protein belongs to the TVP23 family.

It localises to the membrane. This is Golgi apparatus membrane protein TVP23 homolog B (TVP23B) from Pongo abelii (Sumatran orangutan).